A 327-amino-acid chain; its full sequence is tRNA uridine(34) hydroxylase (327 aa).

The region spanning 122-218 (QENRCLVLDV…YGLKMGTGKW (97 aa)) is the Rhodanese domain. The active-site Cysteine persulfide intermediate is C178.

Belongs to the TrhO family.

It carries out the reaction uridine(34) in tRNA + AH2 + O2 = 5-hydroxyuridine(34) in tRNA + A + H2O. In terms of biological role, catalyzes oxygen-dependent 5-hydroxyuridine (ho5U) modification at position 34 in tRNAs. The protein is tRNA uridine(34) hydroxylase of Chlamydia trachomatis serovar A (strain ATCC VR-571B / DSM 19440 / HAR-13).